The following is a 232-amino-acid chain: MGKLTKNQKLAAGKIEAGKAYSLKEAASLVKEITFTKFDASLDIDVRLGVDPRKANQMVRGVVSLPHGTGKQVRVLVLCTPDAEAAAKEAGADYVGLDEYIEKIKGGWTDIDVIITMPSIMGKIGALGRVLGPRGLMPNPKSGTVTMDVAKAVREVKQGKIDFKVDKSGIVHTSIGKVSFTAEQIRDNAKEFISTLNKLKPTAAKGTYIKSIYLSSTMSAGIKIDPKSVEEI.

It belongs to the universal ribosomal protein uL1 family. In terms of assembly, part of the 50S ribosomal subunit.

Functionally, binds directly to 23S rRNA. The L1 stalk is quite mobile in the ribosome, and is involved in E site tRNA release. Protein L1 is also a translational repressor protein, it controls the translation of the L11 operon by binding to its mRNA. The sequence is that of Large ribosomal subunit protein uL1 from Bacteroides fragilis (strain ATCC 25285 / DSM 2151 / CCUG 4856 / JCM 11019 / LMG 10263 / NCTC 9343 / Onslow / VPI 2553 / EN-2).